The following is a 520-amino-acid chain: Leucine carboxyl methyltransferase 1 (520 aa).

2 disordered regions span residues 1-116 (MQRD…DDAV) and 142-174 (TQEFSSTLPSNGGHPTGRSGFPQPHHPGSSIRR). Over residues 79–89 (PSLRLSLGLPR) the composition is skewed to low complexity. Polar residues-rich tracts occupy residues 95–110 (HSGQTSDATNITSTAR) and 142–151 (TQEFSSTLPS). S-adenosyl-L-methionine-binding positions include Arg-185, Gly-210, Asp-237, 305 to 306 (DV), and Glu-343.

Belongs to the methyltransferase superfamily. LCMT family.

It catalyses the reaction [phosphatase 2A protein]-C-terminal L-leucine + S-adenosyl-L-methionine = [phosphatase 2A protein]-C-terminal L-leucine methyl ester + S-adenosyl-L-homocysteine. Its function is as follows. Methylates the carboxyl group of the C-terminal leucine residue of protein phosphatase 2A catalytic subunits to form alpha-leucine ester residues. This is Leucine carboxyl methyltransferase 1 (PPM1) from Mycosarcoma maydis (Corn smut fungus).